The sequence spans 326 residues: MKFGLFFLNFQKDGITSEETLDNMVKTVTLIDSTKYHFNTAFVNEHHFSKNGIVGAPITAAGFLLGLTNKLHIGSLNQVITTHHPVRVAEEASLLDQMSEGRFILGFSDCESDFEMEFFRRHISSRQQQFEACYEIINDALTTGYCHPQNDFYDFPKVSINPHCYSENGPKQYVSATSKEVVMWAAKKALPLTFKWEDNLETKERYAILYNKTAQQYGIDISDVDHQLTVIANLNADRSTAQEEVREYLKDYITETYPQMDRDEKINCIIEENAVGSHDDYYESTKLAVEKTGSKNILLSFESMSDIKDVKDIIDMLNQKIEMNLP.

Belongs to the bacterial luciferase oxidoreductase family. Heterodimer of an alpha and a beta chain.

It carries out the reaction a long-chain fatty aldehyde + FMNH2 + O2 = a long-chain fatty acid + hnu + FMN + H2O + 2 H(+). Its function is as follows. Light-emitting reaction in luminous bacteria. The specific role of the beta subunit is unknown, but it is absolutely required for bioluminescence activity. This Aliivibrio fischeri (Vibrio fischeri) protein is Alkanal monooxygenase beta chain (luxB).